The sequence spans 249 residues: MNLLLMGGTKDSVEIGKKLRDLGDLFILYTSTTDYGGKLGEEFANKVITKPLDKNELKEVIKKYNIDILVDATHPFAINASKNAIEVCKELNIKYVRFERKEEKINHPNIIYVKDFEEAARLAKKANKVFHMAGIKNLKMVVDIVGKDKVIARVLPISVSEALKILPQKQIVAMYGTFSKELNKYLIRDYNCDVIITKDSGESGGFKEKVYGALEAEAKVIVVERPKIDYPVCFDDIDELIKYIANLKI.

The protein belongs to the precorrin-6x reductase family.

The catalysed reaction is Co-precorrin-6B + NAD(+) = Co-precorrin-6A + NADH + H(+). It participates in cofactor biosynthesis; adenosylcobalamin biosynthesis; cob(II)yrinate a,c-diamide from sirohydrochlorin (anaerobic route): step 7/10. Catalyzes the reduction of the macrocycle of cobalt-precorrin-6A to cobalt-precorrin-6B. The chain is Cobalt-precorrin-6A reductase (cbiJ) from Methanocaldococcus jannaschii (strain ATCC 43067 / DSM 2661 / JAL-1 / JCM 10045 / NBRC 100440) (Methanococcus jannaschii).